Consider the following 189-residue polypeptide: Elongation factor P (189 aa).

N6-(3,6-diaminohexanoyl)-5-hydroxylysine is present on lysine 35.

Belongs to the elongation factor P family. May be beta-lysylated on the epsilon-amino group of Lys-35 by the combined action of EpmA and EpmB, and then hydroxylated on the C5 position of the same residue by EpmC (if this protein is present). Lysylation is critical for the stimulatory effect of EF-P on peptide-bond formation. The lysylation moiety may extend toward the peptidyltransferase center and stabilize the terminal 3-CCA end of the tRNA. Hydroxylation of the C5 position on Lys-35 may allow additional potential stabilizing hydrogen-bond interactions with the P-tRNA.

The protein resides in the cytoplasm. It functions in the pathway protein biosynthesis; polypeptide chain elongation. Functionally, involved in peptide bond synthesis. Alleviates ribosome stalling that occurs when 3 or more consecutive Pro residues or the sequence PPG is present in a protein, possibly by augmenting the peptidyl transferase activity of the ribosome. Modification of Lys-35 is required for alleviation. The chain is Elongation factor P from Wigglesworthia glossinidia brevipalpis.